Here is a 157-residue protein sequence, read N- to C-terminus: Ribosomal RNA large subunit methyltransferase H (157 aa).

S-adenosyl-L-methionine is bound by residues L73, G105, and 124–129; that span reads MSKMTF.

Belongs to the RNA methyltransferase RlmH family. Homodimer.

The protein resides in the cytoplasm. The catalysed reaction is pseudouridine(1915) in 23S rRNA + S-adenosyl-L-methionine = N(3)-methylpseudouridine(1915) in 23S rRNA + S-adenosyl-L-homocysteine + H(+). Its function is as follows. Specifically methylates the pseudouridine at position 1915 (m3Psi1915) in 23S rRNA. The chain is Ribosomal RNA large subunit methyltransferase H from Bacteroides thetaiotaomicron (strain ATCC 29148 / DSM 2079 / JCM 5827 / CCUG 10774 / NCTC 10582 / VPI-5482 / E50).